A 119-amino-acid polypeptide reads, in one-letter code: Ribonuclease P protein component (119 aa).

It belongs to the RnpA family. As to quaternary structure, consists of a catalytic RNA component (M1 or rnpB) and a protein subunit.

It carries out the reaction Endonucleolytic cleavage of RNA, removing 5'-extranucleotides from tRNA precursor.. Functionally, RNaseP catalyzes the removal of the 5'-leader sequence from pre-tRNA to produce the mature 5'-terminus. It can also cleave other RNA substrates such as 4.5S RNA. The protein component plays an auxiliary but essential role in vivo by binding to the 5'-leader sequence and broadening the substrate specificity of the ribozyme. This chain is Ribonuclease P protein component, found in Dictyoglomus turgidum (strain DSM 6724 / Z-1310).